We begin with the raw amino-acid sequence, 300 residues long: Cholesterol 25-hydroxylase-like protein (300 aa).

A glycan (N-linked (GlcNAc...) asparagine) is linked at asparagine 9. 3 consecutive transmembrane segments (helical) span residues 43–63, 95–115, and 130–152; these read LFPP…FTFI, LQGW…LIWV, and MVSQ…HYFN. The Fatty acid hydroxylase domain maps to 135 to 266; the sequence is AIFFLAFDFT…WFNYLDRLMG (132 aa). The Histidine box-1 signature appears at 148-152; that stretch reads FHYFN. Residues 163–167 carry the Histidine box-2 motif; it reads HSVHH. A helical transmembrane segment spans residues 180 to 200; the sequence is LHPFELFFVATFITTVPWIFP. The Histidine box-3 signature appears at 242–248; that stretch reads AHDMHHL.

This sequence belongs to the sterol desaturase family. Fe cation is required as a cofactor.

The protein localises to the membrane. In terms of biological role, probable sterol desaturase. The chain is Cholesterol 25-hydroxylase-like protein from Caenorhabditis briggsae.